The chain runs to 238 residues: Large ribosomal subunit protein uL1 (238 aa).

Belongs to the universal ribosomal protein uL1 family. Part of the 50S ribosomal subunit.

In terms of biological role, binds directly to 23S rRNA. The L1 stalk is quite mobile in the ribosome, and is involved in E site tRNA release. Protein L1 is also a translational repressor protein, it controls the translation of the L11 operon by binding to its mRNA. This Gloeobacter violaceus (strain ATCC 29082 / PCC 7421) protein is Large ribosomal subunit protein uL1.